Reading from the N-terminus, the 909-residue chain is Protein translocase subunit SecA (909 aa).

ATP-binding positions include Gln-87, 105–109 (GEGKT), and Asp-512. Residues 863-909 (LVGGGDEDDESIAAHTPMIRDGDKVGRNDPCPCGSGRKYKQCHGKLS) form a disordered region. Positions 880–889 (MIRDGDKVGR) are enriched in basic and acidic residues. Zn(2+) is bound by residues Cys-893, Cys-895, Cys-904, and His-905. Basic residues predominate over residues 899–909 (RKYKQCHGKLS).

Belongs to the SecA family. As to quaternary structure, monomer and homodimer. Part of the essential Sec protein translocation apparatus which comprises SecA, SecYEG and auxiliary proteins SecDF-YajC and YidC. Zn(2+) serves as cofactor.

Its subcellular location is the cell inner membrane. It localises to the cytoplasm. It carries out the reaction ATP + H2O + cellular proteinSide 1 = ADP + phosphate + cellular proteinSide 2.. In terms of biological role, part of the Sec protein translocase complex. Interacts with the SecYEG preprotein conducting channel. Has a central role in coupling the hydrolysis of ATP to the transfer of proteins into and across the cell membrane, serving both as a receptor for the preprotein-SecB complex and as an ATP-driven molecular motor driving the stepwise translocation of polypeptide chains across the membrane. The chain is Protein translocase subunit SecA from Shewanella putrefaciens (strain CN-32 / ATCC BAA-453).